The following is a 442-amino-acid chain: 3-phosphoshikimate 1-carboxyvinyltransferase (442 aa).

3-phosphoshikimate is bound by residues K27, S28, and R32. K27 provides a ligand contact to phosphoenolpyruvate. Phosphoenolpyruvate-binding residues include G100 and R128. 3-phosphoshikimate is bound by residues S174, S175, Q176, S204, D321, and K348. Position 176 (Q176) interacts with phosphoenolpyruvate. The active-site Proton acceptor is D321. Residues R352, R394, and K424 each contribute to the phosphoenolpyruvate site.

This sequence belongs to the EPSP synthase family. Monomer.

The protein localises to the cytoplasm. The enzyme catalyses 3-phosphoshikimate + phosphoenolpyruvate = 5-O-(1-carboxyvinyl)-3-phosphoshikimate + phosphate. The protein operates within metabolic intermediate biosynthesis; chorismate biosynthesis; chorismate from D-erythrose 4-phosphate and phosphoenolpyruvate: step 6/7. Catalyzes the transfer of the enolpyruvyl moiety of phosphoenolpyruvate (PEP) to the 5-hydroxyl of shikimate-3-phosphate (S3P) to produce enolpyruvyl shikimate-3-phosphate and inorganic phosphate. This chain is 3-phosphoshikimate 1-carboxyvinyltransferase, found in Herminiimonas arsenicoxydans.